The sequence spans 305 residues: tRNA uridine(34) hydroxylase (305 aa).

Residues 124 to 219 (QDEETLVVDT…YLETIPKEES (96 aa)) enclose the Rhodanese domain. The active-site Cysteine persulfide intermediate is the cysteine 179.

The protein belongs to the TrhO family.

It catalyses the reaction uridine(34) in tRNA + AH2 + O2 = 5-hydroxyuridine(34) in tRNA + A + H2O. Its function is as follows. Catalyzes oxygen-dependent 5-hydroxyuridine (ho5U) modification at position 34 in tRNAs. This chain is tRNA uridine(34) hydroxylase, found in Bartonella bacilliformis (strain ATCC 35685 / KC583 / Herrer 020/F12,63).